Here is a 159-residue protein sequence, read N- to C-terminus: Vasotocin-neurophysin VT (159 aa).

The N-terminal stretch at 1-17 (TAPVPACFLCLLALSSA) is a signal peptide. Residues Cys-18 and Cys-23 are joined by a disulfide bond. The residue at position 26 (Gly-26) is a Glycine amide. Disulfide bonds link Cys-39/Cys-83, Cys-42/Cys-56, Cys-50/Cys-73, Cys-57/Cys-63, Cys-90/Cys-102, Cys-96/Cys-114, and Cys-103/Cys-108. Asn-129 carries N-linked (GlcNAc...) asparagine glycosylation.

The protein belongs to the vasopressin/oxytocin family. Seven disulfide bonds are present in neurophysin.

Its subcellular location is the secreted. Functionally, vasotocin is an antidiuretic hormone. The polypeptide is Vasotocin-neurophysin VT (Bufo japonicus (Japanese common toad)).